Here is a 331-residue protein sequence, read N- to C-terminus: Phenylalanine--tRNA ligase alpha subunit (331 aa).

Glu-252 is a binding site for Mg(2+).

Belongs to the class-II aminoacyl-tRNA synthetase family. Phe-tRNA synthetase alpha subunit type 1 subfamily. Tetramer of two alpha and two beta subunits. Mg(2+) is required as a cofactor.

The protein localises to the cytoplasm. It carries out the reaction tRNA(Phe) + L-phenylalanine + ATP = L-phenylalanyl-tRNA(Phe) + AMP + diphosphate + H(+). The protein is Phenylalanine--tRNA ligase alpha subunit of Stenotrophomonas maltophilia (strain R551-3).